The sequence spans 365 residues: Aminomethyltransferase (365 aa).

Belongs to the GcvT family. The glycine cleavage system is composed of four proteins: P, T, L and H.

It carries out the reaction N(6)-[(R)-S(8)-aminomethyldihydrolipoyl]-L-lysyl-[protein] + (6S)-5,6,7,8-tetrahydrofolate = N(6)-[(R)-dihydrolipoyl]-L-lysyl-[protein] + (6R)-5,10-methylene-5,6,7,8-tetrahydrofolate + NH4(+). Functionally, the glycine cleavage system catalyzes the degradation of glycine. In Aeromonas salmonicida (strain A449), this protein is Aminomethyltransferase.